Reading from the N-terminus, the 148-residue chain is Large ribosomal subunit protein bL9 (148 aa).

Belongs to the bacterial ribosomal protein bL9 family.

In terms of biological role, binds to the 23S rRNA. This is Large ribosomal subunit protein bL9 from Acinetobacter baumannii (strain AB307-0294).